Consider the following 197-residue polypeptide: Putative sulfur carrier protein aq_1421 (197 aa).

Cysteine 17 (cysteine persulfide intermediate) is an active-site residue.

Belongs to the sulfur carrier protein TusA family.

This is Putative sulfur carrier protein aq_1421 from Aquifex aeolicus (strain VF5).